Here is a 219-residue protein sequence, read N- to C-terminus: ATP-dependent Clp protease proteolytic subunit (219 aa).

Residue S101 is the Nucleophile of the active site. The active site involves H126.

Belongs to the peptidase S14 family. Component of the chloroplastic Clp protease core complex.

It localises to the plastid. Its subcellular location is the chloroplast stroma. It carries out the reaction Hydrolysis of proteins to small peptides in the presence of ATP and magnesium. alpha-casein is the usual test substrate. In the absence of ATP, only oligopeptides shorter than five residues are hydrolyzed (such as succinyl-Leu-Tyr-|-NHMec, and Leu-Tyr-Leu-|-Tyr-Trp, in which cleavage of the -Tyr-|-Leu- and -Tyr-|-Trp bonds also occurs).. Functionally, cleaves peptides in various proteins in a process that requires ATP hydrolysis. Has a chymotrypsin-like activity. Plays a major role in the degradation of misfolded proteins. This Chara vulgaris (Common stonewort) protein is ATP-dependent Clp protease proteolytic subunit.